A 153-amino-acid polypeptide reads, in one-letter code: Hemoglobin-3 (153 aa).

Residue Ser2 is modified to N-acetylserine. A Globin domain is found at Gly4–Lys150. Residue His99 participates in heme b binding.

This sequence belongs to the globin family. In terms of assembly, homotetramer.

The protein localises to the cytoplasm. The sequence is that of Hemoglobin-3 from Phacoides pectinatus (Thick lucine).